The primary structure comprises 304 residues: Acetyl-coenzyme A carboxylase carboxyl transferase subunit beta (304 aa).

The 270-residue stretch at 25–294 (LWIKCPETGE…KAIKRDTATE (270 aa)) folds into the CoA carboxyltransferase N-terminal domain.

This sequence belongs to the AccD/PCCB family. In terms of assembly, acetyl-CoA carboxylase is a heterohexamer composed of biotin carboxyl carrier protein (AccB), biotin carboxylase (AccC) and two subunits each of ACCase subunit alpha (AccA) and ACCase subunit beta (AccD).

It is found in the cytoplasm. The catalysed reaction is N(6)-carboxybiotinyl-L-lysyl-[protein] + acetyl-CoA = N(6)-biotinyl-L-lysyl-[protein] + malonyl-CoA. The protein operates within lipid metabolism; malonyl-CoA biosynthesis; malonyl-CoA from acetyl-CoA: step 1/1. Functionally, component of the acetyl coenzyme A carboxylase (ACC) complex. Biotin carboxylase (BC) catalyzes the carboxylation of biotin on its carrier protein (BCCP) and then the CO(2) group is transferred by the transcarboxylase to acetyl-CoA to form malonyl-CoA. The sequence is that of Acetyl-coenzyme A carboxylase carboxyl transferase subunit beta from Sinorhizobium medicae (strain WSM419) (Ensifer medicae).